Consider the following 791-residue polypeptide: Cellobionic acid phosphorylase (791 aa).

The active-site Proton donor is Asp-478.

Belongs to the glycosyl hydrolase 94 family. Cellobionic acid phosphorylase subfamily. In terms of assembly, homodimer.

It catalyses the reaction 4-O-beta-D-glucopyranosyl-D-gluconate + phosphate = D-gluconate + alpha-D-glucose 1-phosphate. It functions in the pathway glycan metabolism; cellulose degradation. Its function is as follows. Catalyzes the reversible phosphorolysis of cellobionic acid (4-O-beta-D-glucopyranosyl-D-gluconate), a probable step in cellulose degradation. May be part of a metabolic pathway where cellobionic acid is converted into alpha-D-glucose 1-phosphate and D-gluconic acid to enter glycolysis and the pentose phosphate pathway, respectively. Produces 4-O-beta-D-glucopyranosyl-D-glucuronate from alpha-D-glucose 1-phosphate and D-glucuronate with low activity in the synthetic direction. The protein is Cellobionic acid phosphorylase of Neurospora crassa (strain ATCC 24698 / 74-OR23-1A / CBS 708.71 / DSM 1257 / FGSC 987).